The following is a 123-amino-acid chain: MARGSALLLASLLLAAALSASAGLWSPAKEKRGWTLNSAGYLLGPHAVGNHRSFSDKNGLTSKRELRPEDDMKPGSFDRSIPENNIMRTIIEFLSFLHLKEAGALDRLLDLPAAASSEDIERS.

Residues 1 to 19 form the signal peptide; that stretch reads MARGSALLLASLLLAAALS. A propeptide spanning residues 20–30 is cleaved from the precursor; it reads ASAGLWSPAKE. The segment at 46 to 80 is disordered; sequence HAVGNHRSFSDKNGLTSKRELRPEDDMKPGSFDRS. Over residues 62-73 the composition is skewed to basic and acidic residues; it reads SKRELRPEDDMK. A phosphoserine mark is found at serine 116 and serine 117.

This sequence belongs to the galanin family.

Its subcellular location is the secreted. Endocrine hormone of the central and peripheral nervous systems that binds and activates the G protein-coupled receptors GALR1, GALR2, and GALR3. This small neuropeptide may regulate diverse physiologic functions including contraction of smooth muscle of the gastrointestinal and genitourinary tract, growth hormone and insulin release and adrenal secretion. In Homo sapiens (Human), this protein is Galanin peptides (GAL).